The sequence spans 459 residues: tRNA(Ile)-lysidine synthase (459 aa).

38–43 serves as a coordination point for ATP; that stretch reads SGGMDS.

This sequence belongs to the tRNA(Ile)-lysidine synthase family.

Its subcellular location is the cytoplasm. The enzyme catalyses cytidine(34) in tRNA(Ile2) + L-lysine + ATP = lysidine(34) in tRNA(Ile2) + AMP + diphosphate + H(+). Functionally, ligates lysine onto the cytidine present at position 34 of the AUA codon-specific tRNA(Ile) that contains the anticodon CAU, in an ATP-dependent manner. Cytidine is converted to lysidine, thus changing the amino acid specificity of the tRNA from methionine to isoleucine. The polypeptide is tRNA(Ile)-lysidine synthase (Acinetobacter baylyi (strain ATCC 33305 / BD413 / ADP1)).